Consider the following 501-residue polypeptide: ATP synthase subunit alpha (501 aa).

Position 169 to 176 (169 to 176) interacts with ATP; it reads GDRQTGKT.

Belongs to the ATPase alpha/beta chains family. F-type ATPases have 2 components, CF(1) - the catalytic core - and CF(0) - the membrane proton channel. CF(1) has five subunits: alpha(3), beta(3), gamma(1), delta(1), epsilon(1). CF(0) has three main subunits: a(1), b(2) and c(9-12). The alpha and beta chains form an alternating ring which encloses part of the gamma chain. CF(1) is attached to CF(0) by a central stalk formed by the gamma and epsilon chains, while a peripheral stalk is formed by the delta and b chains.

It is found in the cell membrane. It catalyses the reaction ATP + H2O + 4 H(+)(in) = ADP + phosphate + 5 H(+)(out). Its function is as follows. Produces ATP from ADP in the presence of a proton gradient across the membrane. The alpha chain is a regulatory subunit. This Streptococcus pneumoniae serotype 2 (strain D39 / NCTC 7466) protein is ATP synthase subunit alpha.